A 682-amino-acid chain; its full sequence is UvrABC system protein B (682 aa).

Residues 27-414 (DNIRAGVAHQ…SEGIVVEQII (388 aa)) enclose the Helicase ATP-binding domain. 40-47 (GVTGSGKT) is a binding site for ATP. Residues 93–116 (YYDYYQPEAYVPTSDTYIEKDSSI) carry the Beta-hairpin motif. Positions 432–594 (QMEDLMTECR…IEPVSVRKSL (163 aa)) constitute a Helicase C-terminal domain. The tract at residues 609–628 (AAKGRGKGRGRQAAPAQTAA) is disordered. One can recognise a UVR domain in the interval 642 to 677 (GGLIQRLEREMRESARDLEFEKAAELRDRIRMLRER).

The protein belongs to the UvrB family. As to quaternary structure, forms a heterotetramer with UvrA during the search for lesions. Interacts with UvrC in an incision complex.

It localises to the cytoplasm. In terms of biological role, the UvrABC repair system catalyzes the recognition and processing of DNA lesions. A damage recognition complex composed of 2 UvrA and 2 UvrB subunits scans DNA for abnormalities. Upon binding of the UvrA(2)B(2) complex to a putative damaged site, the DNA wraps around one UvrB monomer. DNA wrap is dependent on ATP binding by UvrB and probably causes local melting of the DNA helix, facilitating insertion of UvrB beta-hairpin between the DNA strands. Then UvrB probes one DNA strand for the presence of a lesion. If a lesion is found the UvrA subunits dissociate and the UvrB-DNA preincision complex is formed. This complex is subsequently bound by UvrC and the second UvrB is released. If no lesion is found, the DNA wraps around the other UvrB subunit that will check the other stand for damage. This Oleidesulfovibrio alaskensis (strain ATCC BAA-1058 / DSM 17464 / G20) (Desulfovibrio alaskensis) protein is UvrABC system protein B.